Reading from the N-terminus, the 141-residue chain is Nucleoside diphosphate kinase (141 aa).

ATP-binding residues include Lys-11, Phe-59, Arg-87, Thr-93, Arg-104, and Asn-114. The active-site Pros-phosphohistidine intermediate is the His-117.

The protein belongs to the NDK family. Homotetramer. The cofactor is Mg(2+).

The protein localises to the cytoplasm. The catalysed reaction is a 2'-deoxyribonucleoside 5'-diphosphate + ATP = a 2'-deoxyribonucleoside 5'-triphosphate + ADP. The enzyme catalyses a ribonucleoside 5'-diphosphate + ATP = a ribonucleoside 5'-triphosphate + ADP. Functionally, major role in the synthesis of nucleoside triphosphates other than ATP. The ATP gamma phosphate is transferred to the NDP beta phosphate via a ping-pong mechanism, using a phosphorylated active-site intermediate. The polypeptide is Nucleoside diphosphate kinase (Paraburkholderia phymatum (strain DSM 17167 / CIP 108236 / LMG 21445 / STM815) (Burkholderia phymatum)).